Consider the following 122-residue polypeptide: Ribonuclease P protein component (122 aa).

This sequence belongs to the RnpA family. As to quaternary structure, consists of a catalytic RNA component (M1 or rnpB) and a protein subunit.

The enzyme catalyses Endonucleolytic cleavage of RNA, removing 5'-extranucleotides from tRNA precursor.. Functionally, RNaseP catalyzes the removal of the 5'-leader sequence from pre-tRNA to produce the mature 5'-terminus. It can also cleave other RNA substrates such as 4.5S RNA. The protein component plays an auxiliary but essential role in vivo by binding to the 5'-leader sequence and broadening the substrate specificity of the ribozyme. In Oenococcus oeni (strain ATCC BAA-331 / PSU-1), this protein is Ribonuclease P protein component.